A 602-amino-acid chain; its full sequence is Potassium voltage-gated channel subfamily A member 5 (602 aa).

The tract at residues 1 to 107 is disordered; sequence MEISLVPMEN…EDQAPQDSGS (107 aa). Positions 1–202 are tetramerization domain; it reads MEISLVPMEN…FYQLGDEAME (202 aa). The Cytoplasmic segment spans residues 1-238; it reads MEISLVPMEN…LIFEYPESSG (238 aa). Positions 66-78 are enriched in pro residues; it reads PLPPMPQELPQPR. Serine 81 carries the phosphoserine; by CK2 and PKA modification. Lysine 212 is covalently cross-linked (Glycyl lysine isopeptide (Lys-Gly) (interchain with G-Cter in SUMO)). Residues 239 to 260 form a helical membrane-spanning segment; the sequence is SARAIAIVSVLVILISIITFCL. Topologically, residues 261–314 are extracellular; sequence ETLPEFRDERELLRHPPVPPQPPAPAPGANGSGSGVLSSGPTVAPLLPRTLADP. The interval 274-297 is disordered; that stretch reads RHPPVPPQPPAPAPGANGSGSGVL. A compositionally biased stretch (pro residues) spans 276–286; that stretch reads PPVPPQPPAPA. Residue asparagine 290 is glycosylated (N-linked (GlcNAc...) asparagine). A helical transmembrane segment spans residues 315-336; it reads FFIVETTCVIWFTFELLVRFFA. Cysteine 337 carries the S-palmitoyl cysteine lipid modification. The Cytoplasmic portion of the chain corresponds to 337-347; sequence CPSKAEFSRNI. The chain crosses the membrane as a helical span at residues 348 to 368; sequence MNIIDIVAIFPYFITLGTELA. At 369-384 the chain is on the extracellular side; it reads EQQPGGGGQNGQQAMS. Residues 385-405 form a helical; Voltage-sensor membrane-spanning segment; sequence LAILRVIRLVRVFRIFKLSRH. The Cytoplasmic portion of the chain corresponds to 406-420; that stretch reads SKGLQILGKTLQASM. An S4-S5 linker region spans residues 407–420; it reads KGLQILGKTLQASM. A helical transmembrane segment spans residues 421 to 442; that stretch reads RELGLLIFFLFIGVILFSSAVY. The Extracellular portion of the chain corresponds to 443-456; sequence FAEADNQGSHFSSI. The segment at residues 457–468 is an intramembrane region (helical); the sequence is PDAFWWAVVTMT. The Selectivity filter signature appears at 469–474; sequence TVGYGD. An intramembrane segment occupies 469-476; sequence TVGYGDMR. The Extracellular portion of the chain corresponds to 477–483; that stretch reads PITVGGK. A helical transmembrane segment spans residues 484-512; that stretch reads IVGSLCAIAGVLTIALPVPVIVSNFNYFY. The Cytoplasmic segment spans residues 513-602; sequence HRETDHEEQA…CLDTSRETDL (90 aa). Lysine 525 participates in a covalent cross-link: Glycyl lysine isopeptide (Lys-Gly) (interchain with G-Cter in SUMO). Phosphoserine; by PKA is present on residues serine 535, serine 546, and serine 569. A PDZ-binding motif is present at residues 600 to 602; sequence TDL.

Belongs to the potassium channel family. A (Shaker) (TC 1.A.1.2) subfamily. Kv1.5/KCNA5 sub-subfamily. Homotetramer and heterotetramer of potassium channel proteins. Interacts with DLG1, which enhances channel currents. Forms a ternary complex with DLG1 and CAV3. Interacts with KCNAB1. Interacts with UBE2I. Interacts with XIRP2; the interaction is required for normal action potential configuration in the heart. Glycosylated. Post-translationally, sumoylated on Lys-212, and Lys-525, preferentially with SUMO3. Sumoylation regulates the voltage sensitivity of the channel. Expressed in the heart (at protein level). Expressed in the brain and weakly expressed in the thymus, skeletal muscle and spleen.

The protein localises to the cell membrane. The catalysed reaction is K(+)(in) = K(+)(out). Voltage-gated potassium channel that mediates transmembrane potassium transport in excitable membranes. Forms tetrameric potassium-selective channels through which potassium ions pass in accordance with their electrochemical gradient. The channel alternates between opened and closed conformations in response to the voltage difference across the membrane. Can form functional homotetrameric channels and heterotetrameric channels that contain variable proportions of KCNA1, KCNA2, KCNA4, KCNA5, and possibly other family members as well; channel properties depend on the type of alpha subunits that are part of the channel. Channel properties are modulated by cytoplasmic beta subunits that regulate the subcellular location of the alpha subunits and promote rapid inactivation. Homotetrameric channels display rapid activation and slow inactivation. Required for normal electrical conduction including formation of the infranodal ventricular conduction system and normal action potential configuration, as a result of its interaction with XIRP2. May play a role in regulating the secretion of insulin in normal pancreatic islets. Its function is as follows. Voltage-gated potassium channel that mediates transmembrane potassium transport in excitable membranes. Forms tetrameric potassium-selective channels through which potassium ions pass in accordance with their electrochemical gradient. The channel alternates between opened and closed conformations in response to the voltage difference across the membrane. Functionally, inactive. Inhibits expression of isoform 1 and isoform 2. The polypeptide is Potassium voltage-gated channel subfamily A member 5 (Kcna5) (Mus musculus (Mouse)).